Here is a 208-residue protein sequence, read N- to C-terminus: Glutathione S-transferase F6 (208 aa).

Positions 2–83 constitute a GST N-terminal domain; that stretch reads AGIKVFGHPA…YIAHEFSDKG (82 aa). Glutathione-binding positions include 12 to 13, 41 to 42, 54 to 55, and 67 to 68; these read ST, HK, KV, and ES. The GST C-terminal domain maps to 89–208; that stretch reads TGKDMAIIAM…TSRPSAQKVL (120 aa).

The protein belongs to the GST superfamily. Phi family.

It is found in the cytoplasm. The protein resides in the cytosol. The catalysed reaction is RX + glutathione = an S-substituted glutathione + a halide anion + H(+). Involved in camalexin biosynthesis by probably catalyzing the conjugation of GSH with indole-3-acetonitrile (IAN). May be involved in the conjugation of reduced glutathione to a wide number of exogenous and endogenous hydrophobic electrophiles and have a detoxification role against certain herbicides. The polypeptide is Glutathione S-transferase F6 (GSTF6) (Arabidopsis thaliana (Mouse-ear cress)).